A 640-amino-acid chain; its full sequence is MPLSFERFQGEGVFGLSSSSFYSDSQKIWSNQDKTEAKQEDLGYVVGGFLPEPTSVLDALRSPSPLASYSSTTTTLSSSHGGGGTTVTNTTVTAGDDNNNNKCSQMGLDDLDGVLSASSPGQEQSILRLIMDPGSAFGVFDPGFGFGSGSGPVSAPVSDNSNLLCNFPFQEITNPAEALINPSNHCLFYNPPLSPPAKRFNSGSLHQPVFPLSDPDPGHDPVRRQHQFQFPFYHNNQQQQFPSSSSSTAVAMVPVPSPGMAGDDQSVIIEQLFNAAELIGTTGNNNGDHTVLAQGILARLNHHLNTSSNHKSPFQRAASHIAEALLSLIHNESSPPLITPENLILRIAAYRSFSETSPFLQFVNFTANQSILESCNESGFDRIHIIDFDVGYGGQWSSLMQELASGVGGRRRNRASSLKLTVFAPPPSTVSDEFELRFTEENLKTFAGEVKIPFEIELLSVELLLNPAYWPLSLRSSEKEAIAVNLPVNSVASGYLPLILRFLKQLSPNIVVCSDRGCDRNDAPFPNAVIHSLQYHTSLLESLDANQNQDDSSIERFWVQPSIEKLLMKRHRWIERSPPWRILFTQCGFSPASLSQMAEAQAECLLQRNPVRGFHVEKRQSSLVMCWQRKELVTVSAWKC.

Composition is skewed to low complexity over residues 68–79 (SYSSTTTTLSSS) and 86–98 (TVTN…GDDN). The interval 68 to 98 (SYSSTTTTLSSSHGGGGTTVTNTTVTAGDDN) is disordered. Residues 259–639 (GMAGDDQSVI…KELVTVSAWK (381 aa)) form the GRAS domain. The interval 266–331 (SVIIEQLFNA…AEALLSLIHN (66 aa)) is leucine repeat I (LRI). The interval 350–422 (YRSFSETSPF…NRASSLKLTV (73 aa)) is VHIID. The short motif at 383 to 387 (IHIID) is the VHIID element. The leucine repeat II (LRII) stretch occupies residues 438–470 (FTEENLKTFAGEVKIPFEIELLSVELLLNPAYW). The segment at 480–565 (EAIAVNLPVN…RFWVQPSIEK (86 aa)) is PFYRE. The segment at 568 to 639 (MKRHRWIERS…KELVTVSAWK (72 aa)) is SAW.

The protein belongs to the GRAS family. As to expression, expressed in seedlings, roots, cotyledons, leaves and flowers.

The protein resides in the nucleus. Probable transcription factor involved in plant development. The polypeptide is Scarecrow-like protein 27 (SCL27) (Arabidopsis thaliana (Mouse-ear cress)).